The following is a 104-amino-acid chain: Flagellar hook-basal body complex protein FliE (104 aa).

The protein belongs to the FliE family.

The protein resides in the bacterial flagellum basal body. This is Flagellar hook-basal body complex protein FliE from Salmonella arizonae (strain ATCC BAA-731 / CDC346-86 / RSK2980).